The primary structure comprises 1126 residues: Formin-B (1126 aa).

The segment at 1-21 is disordered; sequence MFFKGKKKDKEKEKSHGNIGN. Residues 38–406 form the GBD/FH3 domain; that stretch reads EQNLSNEDLK…LILKDPSKES (369 aa). Residues 427–447 are compositionally biased toward low complexity; that stretch reads LNNSNNNNNNNNSNNNNNDSN. The interval 427–462 is disordered; it reads LNNSNNNNNNNNSNNNNNDSNVSTPNINTGSPLLPP. A compositionally biased stretch (polar residues) spans 448 to 462; that stretch reads VSTPNINTGSPLLPP. Residues 463–514 are a coiled coil; the sequence is QQYQDLEQKLQLTQNEKNESQNKVKQLESEIKGLNSTLTGLQLKVTKLEADL. The span at 518-532 shows a compositional bias: polar residues; the sequence is SVTTPPSDTNGTTSP. 2 disordered regions span residues 518 to 619 and 1004 to 1078; these read SVTT…SVPS and ARKK…QNGT. The region spanning 527-611 is the FH1 domain; it reads NGTTSPPIEA…PGAPAVPNLP (85 aa). Over residues 543-597 the composition is skewed to pro residues; the sequence is GAPPPPPPPPPAPPVSGGGPPPPPPPPPPSSGGGPPPPPPPPSSGGPPPPPPPPG. Composition is skewed to low complexity over residues 598 to 607, 1009 to 1022, and 1032 to 1064; these read GMKKPGAPAV, AASGPSVPSASGSS, and SPITPTSKSSISISQKPPQSTQPSISVQQQQQQ. The FH2 domain occupies 612 to 1011; that stretch reads PKKSSVPSVK…LAARKKAAAS (400 aa). Positions 980 to 1010 form a coiled coil; it reads KFKNEFKRTIESIQKERENVQKLAARKKAAA. Residues 1071-1100 form the DAD domain; that stretch reads DDIPQNGTFMDQLMSKMKGGEAIRASRRAS.

The protein belongs to the formin homology family. Diaphanous subfamily. As to quaternary structure, interacts (via GBD/FH3 domain) with activated Rho-GTPases. Interacts with pfyA and pfyB.

Its function is as follows. Formins play an important role in the nucleation of actin and the formation of linear actin filaments. The sequence is that of Formin-B (forB) from Dictyostelium discoideum (Social amoeba).